Here is a 412-residue protein sequence, read N- to C-terminus: Glucose/galactose transporter (412 aa).

11 helical membrane-spanning segments follow: residues 21 to 41 (YGFALTSLTLLFFMWGFITCL), 62 to 82 (LIQFCFFGAYFIVSLPAGQLV), 90 to 110 (GIVVGLIVAAIGCALFIPAAS), 113 to 133 (VYALFLGALFVLASGVTILQV), 158 to 178 (FNSLGTTVAPVFGAVLILSAA), 192 to 212 (FPYLLLALAFTVLAIIFAILK), 239 to 259 (LGAIGIFVYVGAEVSVGSFLV), 310 to 330 (AFVAIILLFITVATTGHIAMW), 331 to 351 (SVLAIGLFNSIMFPTIFSLAL), 363 to 383 (GILCLAIVGGAIVPLIQGALA), and 388 to 408 (IHLAFLMPIICYAYIAFYGLI).

Belongs to the major facilitator superfamily. FHS transporter (TC 2.A.1.7) family.

The protein localises to the cell inner membrane. Its function is as follows. Intake of glucose and galactose. This is Glucose/galactose transporter (gluP) from Brucella abortus (strain 2308).